The sequence spans 786 residues: Protein translocase subunit SecA 1 (786 aa).

ATP-binding positions include Gln85, 103-107 (GEGKT), and Asp491.

This sequence belongs to the SecA family. Monomer and homodimer. Part of the essential Sec protein translocation apparatus which comprises SecA, SecYEG and auxiliary proteins SecDF. Other proteins may also be involved.

It is found in the cell membrane. The protein resides in the cytoplasm. The catalysed reaction is ATP + H2O + cellular proteinSide 1 = ADP + phosphate + cellular proteinSide 2.. Functionally, part of the Sec protein translocase complex. Interacts with the SecYEG preprotein conducting channel. Has a central role in coupling the hydrolysis of ATP to the transfer of proteins into and across the cell membrane, serving as an ATP-driven molecular motor driving the stepwise translocation of polypeptide chains across the membrane. In Pediococcus pentosaceus (strain ATCC 25745 / CCUG 21536 / LMG 10740 / 183-1w), this protein is Protein translocase subunit SecA 1.